The following is a 251-amino-acid chain: Triosephosphate isomerase (251 aa).

9 to 11 contacts substrate; it reads NWK. Residue histidine 95 is the Electrophile of the active site. Glutamate 167 acts as the Proton acceptor in catalysis. Substrate-binding positions include glycine 173, serine 212, and 233–234; that span reads GG.

This sequence belongs to the triosephosphate isomerase family. Homodimer.

Its subcellular location is the cytoplasm. The catalysed reaction is D-glyceraldehyde 3-phosphate = dihydroxyacetone phosphate. Its pathway is carbohydrate biosynthesis; gluconeogenesis. It participates in carbohydrate degradation; glycolysis; D-glyceraldehyde 3-phosphate from glycerone phosphate: step 1/1. Involved in the gluconeogenesis. Catalyzes stereospecifically the conversion of dihydroxyacetone phosphate (DHAP) to D-glyceraldehyde-3-phosphate (G3P). The chain is Triosephosphate isomerase from Pseudomonas fluorescens (strain Pf0-1).